Here is a 207-residue protein sequence, read N- to C-terminus: Large ribosomal subunit protein uL4 (207 aa).

Belongs to the universal ribosomal protein uL4 family. As to quaternary structure, part of the 50S ribosomal subunit.

One of the primary rRNA binding proteins, this protein initially binds near the 5'-end of the 23S rRNA. It is important during the early stages of 50S assembly. It makes multiple contacts with different domains of the 23S rRNA in the assembled 50S subunit and ribosome. Its function is as follows. Forms part of the polypeptide exit tunnel. The protein is Large ribosomal subunit protein uL4 of Rickettsia rickettsii (strain Iowa).